Consider the following 426-residue polypeptide: Glutamate-1-semialdehyde 2,1-aminomutase (426 aa).

Lysine 265 is subject to N6-(pyridoxal phosphate)lysine.

Belongs to the class-III pyridoxal-phosphate-dependent aminotransferase family. HemL subfamily. In terms of assembly, homodimer. Pyridoxal 5'-phosphate serves as cofactor.

The protein localises to the cytoplasm. The enzyme catalyses (S)-4-amino-5-oxopentanoate = 5-aminolevulinate. The protein operates within porphyrin-containing compound metabolism; protoporphyrin-IX biosynthesis; 5-aminolevulinate from L-glutamyl-tRNA(Glu): step 2/2. This Shigella flexneri serotype 5b (strain 8401) protein is Glutamate-1-semialdehyde 2,1-aminomutase.